A 696-amino-acid polypeptide reads, in one-letter code: DNA topoisomerase 6 subunit B (696 aa).

The interval 1-36 (MDDDAGDGAASGGTKRKVTAASSSAAAKGKAAGKGK) is disordered. Residues 20-36 (AASSSAAAKGKAAGKGK) are compositionally biased toward low complexity. ATP is bound by residues Asn88, Asp187, 208 to 209 (TK), 217 to 224 (GKFGLGAK), and Lys543.

Belongs to the TOP6B family. Homodimer. Heterotetramer of two TOP6A and two TOP6B subunits. Interacts with SPO11-2 and TOP6A3. In terms of tissue distribution, highly expressed in flowers before pollination. Expressed in roots and shoots.

Its subcellular location is the nucleus. It catalyses the reaction ATP-dependent breakage, passage and rejoining of double-stranded DNA.. Its function is as follows. Component of the DNA topoisomerase VI involved in chromatin organization and progression of endoreduplication cycles. Relaxes both positive and negative superturns and exhibits a strong decatenase activity. The B subunit binds ATP. May be involved in cell proliferation and stress tolerance. This is DNA topoisomerase 6 subunit B from Oryza sativa subsp. indica (Rice).